A 525-amino-acid chain; its full sequence is Acetyl-CoA hydrolase (525 aa).

280–284 (GIGNI) is a binding site for CoA. The active-site 5-glutamyl coenzyme A thioester intermediate is Glu305. Residues Asn395 and Gly399 each coordinate CoA.

It belongs to the acetyl-CoA hydrolase/transferase family.

It is found in the cytoplasm. The enzyme catalyses acetyl-CoA + H2O = acetate + CoA + H(+). Required for utilization of acetate. The protein is Acetyl-CoA hydrolase (acu-8) of Neurospora crassa (strain ATCC 24698 / 74-OR23-1A / CBS 708.71 / DSM 1257 / FGSC 987).